A 450-amino-acid chain; its full sequence is Tubulin alpha chain (450 aa).

Position 11 (Gln-11) interacts with GTP. Lys-40 carries the post-translational modification N6-acetyllysine. GTP-binding residues include Glu-71, Ser-140, Gly-144, Thr-145, Thr-179, Asn-206, and Asn-228. Glu-71 is a binding site for Mg(2+). Glu-254 is a catalytic residue.

This sequence belongs to the tubulin family. As to quaternary structure, dimer of alpha and beta chains. A typical microtubule is a hollow water-filled tube with an outer diameter of 25 nm and an inner diameter of 15 nM. Alpha-beta heterodimers associate head-to-tail to form protofilaments running lengthwise along the microtubule wall with the beta-tubulin subunit facing the microtubule plus end conferring a structural polarity. Microtubules usually have 13 protofilaments but different protofilament numbers can be found in some organisms and specialized cells. The cofactor is Mg(2+). Acetylation of alpha chains at Lys-40 stabilizes microtubules and affects affinity and processivity of microtubule motors. This modification has a role in multiple cellular functions, ranging from cell motility, cell cycle progression or cell differentiation to intracellular trafficking and signaling.

It is found in the cytoplasm. It localises to the cytoskeleton. The catalysed reaction is GTP + H2O = GDP + phosphate + H(+). Its function is as follows. Tubulin is the major constituent of microtubules, a cylinder consisting of laterally associated linear protofilaments composed of alpha- and beta-tubulin heterodimers. Microtubules grow by the addition of GTP-tubulin dimers to the microtubule end, where a stabilizing cap forms. Below the cap, tubulin dimers are in GDP-bound state, owing to GTPase activity of alpha-tubulin. The sequence is that of Tubulin alpha chain from Euplotoides octocarinatus (Freshwater ciliate).